The chain runs to 1319 residues: DNA-directed RNA polymerase subunit beta' (1319 aa).

Residues C59, C61, C74, and C77 each contribute to the Zn(2+) site. Mg(2+) contacts are provided by D449, D451, and D453. The Zn(2+) site is built by C773, C846, C853, and C856.

It belongs to the RNA polymerase beta' chain family. In terms of assembly, the RNAP catalytic core consists of 2 alpha, 1 beta, 1 beta' and 1 omega subunit. When a sigma factor is associated with the core the holoenzyme is formed, which can initiate transcription. Mg(2+) is required as a cofactor. The cofactor is Zn(2+).

It catalyses the reaction RNA(n) + a ribonucleoside 5'-triphosphate = RNA(n+1) + diphosphate. In terms of biological role, DNA-dependent RNA polymerase catalyzes the transcription of DNA into RNA using the four ribonucleoside triphosphates as substrates. This Fusobacterium nucleatum subsp. nucleatum (strain ATCC 25586 / DSM 15643 / BCRC 10681 / CIP 101130 / JCM 8532 / KCTC 2640 / LMG 13131 / VPI 4355) protein is DNA-directed RNA polymerase subunit beta'.